A 246-amino-acid polypeptide reads, in one-letter code: 2,5-diamino-6-ribosylamino-4(3H)-pyrimidinone 5'-phosphate reductase (246 aa).

Residues T78, D82, L163, and G186–L190 contribute to the NADP(+) site.

The protein belongs to the HTP reductase family. As to quaternary structure, homodimer.

The catalysed reaction is 2,5-diamino-6-(1-D-ribitylamino)pyrimidin-4(3H)-one 5'-phosphate + NADP(+) = 2,5-diamino-6-(1-D-ribosylamino)pyrimidin-4(3H)-one 5'-phosphate + NADPH + H(+). It catalyses the reaction 2,5-diamino-6-(1-D-ribitylamino)pyrimidin-4(3H)-one 5'-phosphate + NAD(+) = 2,5-diamino-6-(1-D-ribosylamino)pyrimidin-4(3H)-one 5'-phosphate + NADH + H(+). The protein operates within cofactor biosynthesis; riboflavin biosynthesis. Its function is as follows. Catalyzes an early step in riboflavin biosynthesis, the NADPH-dependent reduction of the ribose side chain of 2,5-diamino-6-ribosylamino-4(3H)-pyrimidinone 5'-phosphate, yielding 2,5-diamino-6-ribitylamino-4(3H)-pyrimidinone 5'-phosphate. The chain is 2,5-diamino-6-ribosylamino-4(3H)-pyrimidinone 5'-phosphate reductase (RIB7) from Eremothecium gossypii (strain ATCC 10895 / CBS 109.51 / FGSC 9923 / NRRL Y-1056) (Yeast).